Reading from the N-terminus, the 89-residue chain is Large ribosomal subunit protein bL31B (89 aa).

The interval 70–89 is disordered; the sequence is RVQRFESRRRRRQQQSGEQG.

Belongs to the bacterial ribosomal protein bL31 family. Type B subfamily. In terms of assembly, part of the 50S ribosomal subunit.

This Rubrobacter xylanophilus (strain DSM 9941 / JCM 11954 / NBRC 16129 / PRD-1) protein is Large ribosomal subunit protein bL31B.